The sequence spans 241 residues: MNYKISLRYDGSLFYGWARQPQKRTVQGDLEEIFKSIFKINNIRIIGSGRTDKGVHAYEQTFSVKHSALKYDSHIIYQALCSRTSSDIQILEVQKVDDSFHAQYNATSKTYQYVINDYEFDLFRNNYELFVNQKINDQKILEALELFVGEHDFKSFSTSELTMTIRRINWVKIKRDTHLIIYINANGFLKNMVRMIVASCLDYAFNKISLAKIHELLIYPKKGASIKLAPACGLYLYKVYY.

Aspartate 52 (nucleophile) is an active-site residue. Position 111 (tyrosine 111) interacts with substrate.

Belongs to the tRNA pseudouridine synthase TruA family. Homodimer.

The enzyme catalyses uridine(38/39/40) in tRNA = pseudouridine(38/39/40) in tRNA. In terms of biological role, formation of pseudouridine at positions 38, 39 and 40 in the anticodon stem and loop of transfer RNAs. In Ureaplasma parvum serovar 3 (strain ATCC 27815 / 27 / NCTC 11736), this protein is tRNA pseudouridine synthase A.